The chain runs to 415 residues: Histidine--tRNA ligase (415 aa).

Belongs to the class-II aminoacyl-tRNA synthetase family. As to quaternary structure, homodimer.

It is found in the cytoplasm. The catalysed reaction is tRNA(His) + L-histidine + ATP = L-histidyl-tRNA(His) + AMP + diphosphate + H(+). This chain is Histidine--tRNA ligase, found in Gluconobacter oxydans (strain 621H) (Gluconobacter suboxydans).